The primary structure comprises 539 residues: MAISDMPESTGTTATTATMPHGGSDLRRRHNATETTEVSDSNSKTTDPDSGNSVRESVRVRDSSTDESLARKSCEDDGSRSEVVIESANPVTNGNDGGEKIANGEDRRTDFAAVKLAYRPSVPAHRRIKESPLSSDAIFRQSHAGLFNLCIVVLVAVNSRLIIENLMKYGWLIKTGFWFSSRSLRDWPLLMCCLTLPIFPAAAFVVEKLVQWKYISEPVVLLLHFIITTAALLYPVFVILRCDSVVLSGVTLMLFACIVWLKLVSYTHTNYDMRALAKSIDKGDVLPNSLNTDYPYSVSFKSLAYFMVAPTLCYQTSYPRTACIRKSWVVRQLVKLIIFTGVMGFIIEQYINPIVKNSQHPLKGNLLYAIERVLKLSVPNLYVWLCMFYCFFHLWLNILAELLRFGDREFYKDWWNAKTVEEYWRLWNMPVHKWMVRHIYFPCLRNGIPKGVAILIAFFVSAIFHELCIAVPCHIFKLWAFIGIMCQVPLVLITNYLQNKFRNSMVGNMIFWFFFCILGQPMCVLLYYHDLMNRKGKTE.

The disordered stretch occupies residues 1-104; sequence MAISDMPEST…NDGGEKIANG (104 aa). Polar residues predominate over residues 33-52; it reads TETTEVSDSNSKTTDPDSGN. Residues 56–80 are compositionally biased toward basic and acidic residues; sequence ESVRVRDSSTDESLARKSCEDDGSR. 7 helical membrane passes run 143-163, 187-207, 219-239, 244-264, 294-314, 334-354, and 383-403; these read HAGLFNLCIVVLVAVNSRLII, WPLLMCCLTLPIFPAAAFVVE, VVLLLHFIITTAALLYPVFVI, SVVLSGVTLMLFACIVWLKLV, YPYSVSFKSLAYFMVAPTLCY, VKLIIFTGVMGFIIEQYINPI, and VWLCMFYCFFHLWLNILAELL. Residues 410 to 416 carry the FYXDWWN motif motif; the sequence is FYKDWWN. A run of 3 helical transmembrane segments spans residues 451–471, 473–493, and 506–526; these read GVAILIAFFVSAIFHELCIAV, CHIFKLWAFIGIMCQVPLVLI, and VGNMIFWFFFCILGQPMCVLL. Histidine 465 is an active-site residue.

Belongs to the membrane-bound acyltransferase family. Sterol o-acyltransferase subfamily.

The protein localises to the endoplasmic reticulum membrane. It catalyses the reaction an acyl-CoA + a 1,2-diacyl-sn-glycerol = a triacyl-sn-glycerol + CoA. Its pathway is glycerolipid metabolism; triacylglycerol biosynthesis. Functionally, major contributor to triacylglycerol (TAG) synthesis and oil accumulation in developing seeds. Catalyzes the acylation of the sn-3 hydroxy group of sn-1,2-diacylglycerol using acyl-CoA. Has a marked preference for oleoyl-CoA as substrate. In Corylus americana (American hazelnut), this protein is Diacylglycerol O-acyltransferase 1.